A 941-amino-acid polypeptide reads, in one-letter code: Isoleucine--tRNA ligase (941 aa).

A 'HIGH' region motif is present at residues 59–69 (PYANGNIHIGH). Glu-562 contributes to the L-isoleucyl-5'-AMP binding site. A 'KMSKS' region motif is present at residues 603–607 (KMSKS). Lys-606 contributes to the ATP binding site. Residues Cys-904, Cys-907, Cys-924, and Cys-927 each contribute to the Zn(2+) site.

Belongs to the class-I aminoacyl-tRNA synthetase family. IleS type 1 subfamily. In terms of assembly, monomer. It depends on Zn(2+) as a cofactor.

Its subcellular location is the cytoplasm. It catalyses the reaction tRNA(Ile) + L-isoleucine + ATP = L-isoleucyl-tRNA(Ile) + AMP + diphosphate. Catalyzes the attachment of isoleucine to tRNA(Ile). As IleRS can inadvertently accommodate and process structurally similar amino acids such as valine, to avoid such errors it has two additional distinct tRNA(Ile)-dependent editing activities. One activity is designated as 'pretransfer' editing and involves the hydrolysis of activated Val-AMP. The other activity is designated 'posttransfer' editing and involves deacylation of mischarged Val-tRNA(Ile). The polypeptide is Isoleucine--tRNA ligase (Haemophilus influenzae (strain PittEE)).